The sequence spans 716 residues: Leucine-rich repeat neuronal protein 1 (716 aa).

Residues 1 to 25 (MARMSFVLAAYQMVLSLLMTSLTGS) form the signal peptide. The region spanning 26–72 (SLQSSECPQLCVCEIRPWFTPQSTYREATTVDCNDLRLTRIPSNLSS) is the LRRNT domain. At 26–631 (SLQSSECPQL…DISDQETSTA (606 aa)) the chain is on the extracellular side. An N-linked (GlcNAc...) asparagine glycan is attached at asparagine 69. LRR repeat units lie at residues 73–95 (DTQV…QQLF), 96–117 (NLTE…GLAN), 120–141 (QLTT…CLQD), 144–165 (NLQE…AFSG), 168–189 (NLLR…WFDS), 192–213 (NLEI…NFKP), 216–237 (NLRS…ALVG), 240–261 (SLES…ALQK), and 264–285 (NLKF…DFKN). Asparagine 96, asparagine 106, and asparagine 117 each carry an N-linked (GlcNAc...) asparagine glycan. An LRRCT domain is found at 371–424 (NPLRCDCVIHWINSNKTNIRFMEPLSMFCAMPPEYRGQQVKEVLIQDSSEQCLP). Asparagine 385 carries N-linked (GlcNAc...) asparagine glycosylation. Residues 424–515 (PMISHDTFPN…GADTRVVMIK (92 aa)) enclose the Ig-like C2-type domain. An intrachain disulfide couples cysteine 447 to cysteine 499. N-linked (GlcNAc...) asparagine glycans are attached at residues asparagine 517, asparagine 582, and asparagine 611. A Fibronectin type-III domain is found at 525–617 (QVLKIYVKQT…SCVNVTTKNA (93 aa)). Residues 632-652 (LAAVMGSMFAVISLASIAVYI) form a helical membrane-spanning segment. Residues 653 to 716 (AKRFKRKNYH…VDTSRSYYMW (64 aa)) are Cytoplasmic-facing. Residues 691–700 (DSEKDKDGTA) show a composition bias toward basic and acidic residues. The tract at residues 691-716 (DSEKDKDGTADTKPTQVDTSRSYYMW) is disordered. The segment covering 702–716 (TKPTQVDTSRSYYMW) has biased composition (polar residues).

The protein resides in the membrane. This is Leucine-rich repeat neuronal protein 1 (LRRN1) from Bos taurus (Bovine).